The chain runs to 206 residues: MGGTFDPIHHGHLVAASEVAAKFGLDEVVFVPTGQPWQKSHKLVSRPEHRYLMTVIATASNPRFTVSRVDVDRPGPTFTIDTLRDLRAERPDADLFFITGADALAQILSWKDVDELWSLAHFVGVTRPGHELHDMGRDDVSLLEVPAMAISSTDCRTRVGAGNPVWYLVPDGVVQYIAKYGLYAAPANAADLTPALSGSDDQARTE.

Belongs to the NadD family.

It carries out the reaction nicotinate beta-D-ribonucleotide + ATP + H(+) = deamido-NAD(+) + diphosphate. It functions in the pathway cofactor biosynthesis; NAD(+) biosynthesis; deamido-NAD(+) from nicotinate D-ribonucleotide: step 1/1. Functionally, catalyzes the reversible adenylation of nicotinate mononucleotide (NaMN) to nicotinic acid adenine dinucleotide (NaAD). This is Probable nicotinate-nucleotide adenylyltransferase from Paenarthrobacter aurescens (strain TC1).